Here is a 380-residue protein sequence, read N- to C-terminus: Cytochrome b (380 aa).

4 helical membrane passes run 34–54, 78–99, 114–134, and 179–199; these read FGSLLGICLLTQILTGLLLAT, WLIRNLHANGASFFFICIYLHI, WNTGVILLLALMATAFVGYVL, and FFALHFLLPFMIAGLAFIHLT. Heme b is bound by residues histidine 84 and histidine 98. Heme b contacts are provided by histidine 183 and histidine 197. A ubiquinone is bound at residue histidine 202. 4 helical membrane passes run 227–247, 289–309, 321–341, and 348–368; these read LKDILGFIIMFLPLTTLALFS, LGGVLALAASVLVLFLTPLLH, LSQLLFWTLVANLLILTWVGS, and FIIIGQLASLTYFTILLLLFP.

The protein belongs to the cytochrome b family. As to quaternary structure, the cytochrome bc1 complex contains 11 subunits: 3 respiratory subunits (MT-CYB, CYC1 and UQCRFS1), 2 core proteins (UQCRC1 and UQCRC2) and 6 low-molecular weight proteins (UQCRH/QCR6, UQCRB/QCR7, UQCRQ/QCR8, UQCR10/QCR9, UQCR11/QCR10 and a cleavage product of UQCRFS1). This cytochrome bc1 complex then forms a dimer. Heme b serves as cofactor.

It is found in the mitochondrion inner membrane. In terms of biological role, component of the ubiquinol-cytochrome c reductase complex (complex III or cytochrome b-c1 complex) that is part of the mitochondrial respiratory chain. The b-c1 complex mediates electron transfer from ubiquinol to cytochrome c. Contributes to the generation of a proton gradient across the mitochondrial membrane that is then used for ATP synthesis. This is Cytochrome b (MT-CYB) from Uria aalge (Common mure).